The chain runs to 952 residues: Valine--tRNA ligase (952 aa).

Residues 42–52 carry the 'HIGH' region motif; it reads PNVTGSLHMGH. A 'KMSKS' region motif is present at residues 554–558; the sequence is KMSKS. Position 557 (lysine 557) interacts with ATP. A coiled-coil region spans residues 888 to 952; the sequence is AELARLDGEI…EEQKKTIAAL (65 aa).

This sequence belongs to the class-I aminoacyl-tRNA synthetase family. ValS type 1 subfamily. Monomer.

Its subcellular location is the cytoplasm. The catalysed reaction is tRNA(Val) + L-valine + ATP = L-valyl-tRNA(Val) + AMP + diphosphate. Its function is as follows. Catalyzes the attachment of valine to tRNA(Val). As ValRS can inadvertently accommodate and process structurally similar amino acids such as threonine, to avoid such errors, it has a 'posttransfer' editing activity that hydrolyzes mischarged Thr-tRNA(Val) in a tRNA-dependent manner. The protein is Valine--tRNA ligase of Vibrio parahaemolyticus serotype O3:K6 (strain RIMD 2210633).